Here is a 794-residue protein sequence, read N- to C-terminus: Phenylalanine--tRNA ligase beta subunit (794 aa).

One can recognise a tRNA-binding domain in the interval 40–158 (NSLNSELVLG…LKKYLGKDVK (119 aa)). The B5 domain maps to 402 to 477 (KNKTEFEIKI…RLYSYDNIQE (76 aa)). Positions 455, 461, 464, and 465 each coordinate Mg(2+). One can recognise an FDX-ACB domain in the interval 702–794 (SKFQSSSRDL…NVKKMKVVIR (93 aa)).

This sequence belongs to the phenylalanyl-tRNA synthetase beta subunit family. Type 1 subfamily. Tetramer of two alpha and two beta subunits. It depends on Mg(2+) as a cofactor.

The protein resides in the cytoplasm. It catalyses the reaction tRNA(Phe) + L-phenylalanine + ATP = L-phenylalanyl-tRNA(Phe) + AMP + diphosphate + H(+). The protein is Phenylalanine--tRNA ligase beta subunit of Mycoplasma capricolum subsp. capricolum (strain California kid / ATCC 27343 / NCTC 10154).